The primary structure comprises 52 residues: Insulin (52 aa).

Intrachain disulfides connect Cys7–Cys38, Cys19–Cys51, and Cys37–Cys42.

It belongs to the insulin family. As to quaternary structure, heterodimer of a B chain and an A chain linked by two disulfide bonds.

It localises to the secreted. Its function is as follows. Insulin decreases blood glucose concentration. It increases cell permeability to monosaccharides, amino acids and fatty acids. It accelerates glycolysis, the pentose phosphate cycle, and glycogen synthesis in liver. The protein is Insulin (ins) of Polypterus senegalus (Senegal bichir).